A 317-amino-acid chain; its full sequence is Large ribosomal subunit protein uL10 (317 aa).

Tyrosine 24 bears the Phosphotyrosine mark. Threonine 59 is modified (phosphothreonine). Lysine 264 is covalently cross-linked (Glycyl lysine isopeptide (Lys-Gly) (interchain with G-Cter in ubiquitin)). The segment at 294-317 is disordered; it reads APAKVEAKEESEESDEDMGFGLFD. Lysine 297 is covalently cross-linked (Glycyl lysine isopeptide (Lys-Gly) (interchain with G-Cter in SUMO1); alternate). Lysine 297 participates in a covalent cross-link: Glycyl lysine isopeptide (Lys-Gly) (interchain with G-Cter in SUMO2); alternate. Residues 302–311 show a composition bias toward acidic residues; it reads EESEESDEDM. Phosphoserine is present on residues serine 304 and serine 307.

It belongs to the universal ribosomal protein uL10 family. P0 forms a pentameric complex by interaction with dimers of P1 and P2. Identified in a IGF2BP1-dependent mRNP granule complex containing untranslated mRNAs. Interacts with APEX1. Interacts with FMR1 isoform 6. In terms of processing, ubiquitinated at Lys-264 by RNF14 and RNF25 in response to ribosome collisions (ribosome stalling).

The protein localises to the nucleus. It localises to the cytoplasm. In terms of biological role, ribosomal protein P0 is the functional equivalent of E.coli protein L10. The sequence is that of Large ribosomal subunit protein uL10 (RPLP0) from Homo sapiens (Human).